We begin with the raw amino-acid sequence, 148 residues long: 6,7-dimethyl-8-ribityllumazine synthase (148 aa).

Residues F13, 44–46 (ALE), and 73–75 (MVI) each bind 5-amino-6-(D-ribitylamino)uracil. 78–79 (ET) provides a ligand contact to (2S)-2-hydroxy-3-oxobutyl phosphate. Residue H81 is the Proton donor of the active site. N106 contacts 5-amino-6-(D-ribitylamino)uracil. R120 contacts (2S)-2-hydroxy-3-oxobutyl phosphate.

The protein belongs to the DMRL synthase family.

The catalysed reaction is (2S)-2-hydroxy-3-oxobutyl phosphate + 5-amino-6-(D-ribitylamino)uracil = 6,7-dimethyl-8-(1-D-ribityl)lumazine + phosphate + 2 H2O + H(+). It functions in the pathway cofactor biosynthesis; riboflavin biosynthesis; riboflavin from 2-hydroxy-3-oxobutyl phosphate and 5-amino-6-(D-ribitylamino)uracil: step 1/2. Catalyzes the formation of 6,7-dimethyl-8-ribityllumazine by condensation of 5-amino-6-(D-ribitylamino)uracil with 3,4-dihydroxy-2-butanone 4-phosphate. This is the penultimate step in the biosynthesis of riboflavin. This chain is 6,7-dimethyl-8-ribityllumazine synthase, found in Agrobacterium fabrum (strain C58 / ATCC 33970) (Agrobacterium tumefaciens (strain C58)).